The chain runs to 161 residues: Endoribonuclease YbeY (161 aa).

3 residues coordinate Zn(2+): His121, His125, and His131.

Belongs to the endoribonuclease YbeY family. The cofactor is Zn(2+).

The protein localises to the cytoplasm. In terms of biological role, single strand-specific metallo-endoribonuclease involved in late-stage 70S ribosome quality control and in maturation of the 3' terminus of the 16S rRNA. The polypeptide is Endoribonuclease YbeY (Xanthomonas oryzae pv. oryzae (strain MAFF 311018)).